The sequence spans 403 residues: Putative gustatory receptor 98b (403 aa).

Residues 1 to 11 (MVAQKSRLLAR) lie on the Cytoplasmic side of the membrane. Residues 12–32 (AFPYLDIFSVFALTPPPQSFG) traverse the membrane as a helical segment. Topologically, residues 33 to 48 (HTPHRRLRWYLMTGYV) are extracellular. The helical transmembrane segment at 49–69 (FYATAILATVFIVSYFNIIAI) threads the bilayer. At 70–83 (DEEVLEYNVSDFTR) the chain is on the cytoplasmic side. Residues 84 to 104 (VMGNIQKSLYSIMAIANHLNM) traverse the membrane as a helical segment. The Extracellular segment spans residues 105–144 (LINYRRLGGIYKDIADLEMDMDEASQCFGGQRQRFSFRFR). Residues 145–165 (MALCVGVWMILMVGSMPRLTM) traverse the membrane as a helical segment. Topologically, residues 166-191 (TAMGPFVSTLLKILTEFVMIMQQLKS) are cytoplasmic. A helical membrane pass occupies residues 192-212 (LEYCVFVLIIYELVLRLRRTL). Over 213–259 (SQLQEEFQDCEQQDMLQALCVALKRNQLLLGRIWRLEGDVGSYFTPT) the chain is Extracellular. Residues 260 to 280 (MLLLFLYNGLTILHMVNWAYI) traverse the membrane as a helical segment. Topologically, residues 281–365 (NKFLYDSCCQ…LRFTCGGLFD (85 aa)) are cytoplasmic. A helical membrane pass occupies residues 366–386 (INLKYFGGLLVTIFGYIIILI). The Extracellular portion of the chain corresponds to 387–403 (QFKVQAIAANRYKKVVN).

Belongs to the insect chemoreceptor superfamily. Gustatory receptor (GR) family. Gr2a subfamily.

Its subcellular location is the cell membrane. Its function is as follows. Probable gustatory receptor which mediates acceptance or avoidance behavior, depending on its substrates. The chain is Putative gustatory receptor 98b (Gr98b) from Drosophila melanogaster (Fruit fly).